A 553-amino-acid chain; its full sequence is Pumilio domain-containing protein 5 (553 aa).

8 Pumilio repeats span residues 146–184 (DVVS…VLFD), 185–223 (KLTE…RLVR), 224–260 (KMCD…KLVE), 261–296 (KISS…SFFV), 297–335 (KFLC…HCFN), 347–384 (SVAR…TIIE), 386–421 (CLLR…EMMD), and 432–472 (ETNR…KMVA). An RNA-binding region spans residues 499–514 (FSSGKKIIESLQKLNV).

As to expression, detected in differentiating oocytes with highest levels observed in developing ooctyes in the distal portion of the proximal gonad.

The protein localises to the cytoplasm. Its subcellular location is the P-body. In terms of biological role, RNA-binding protein that binds to the consensus sequence 5'-CUCUGUAUCUUGU-3' in mRNA 3'-UTRs and modulates mRNA expression and stability. Functions redundantly with puf-6 and puf-7 in oocyte formation and organization, early embryonic cell divisions, and repression of expression of glp-1 and other maternal mRNAs in late oogenesis. The chain is Pumilio domain-containing protein 5 from Caenorhabditis elegans.